The chain runs to 349 residues: Ferredoxin--NADP reductase 1 (349 aa).

The FAD site is built by glutamate 36, lysine 44, tyrosine 48, valine 88, leucine 123, aspartate 290, and serine 331.

Belongs to the ferredoxin--NADP reductase type 2 family. Homodimer. The cofactor is FAD.

The catalysed reaction is 2 reduced [2Fe-2S]-[ferredoxin] + NADP(+) + H(+) = 2 oxidized [2Fe-2S]-[ferredoxin] + NADPH. The polypeptide is Ferredoxin--NADP reductase 1 (Bacillus licheniformis (strain ATCC 14580 / DSM 13 / JCM 2505 / CCUG 7422 / NBRC 12200 / NCIMB 9375 / NCTC 10341 / NRRL NRS-1264 / Gibson 46)).